Reading from the N-terminus, the 505-residue chain is Maturase K (505 aa).

The protein belongs to the intron maturase 2 family. MatK subfamily.

The protein localises to the plastid. It is found in the chloroplast. Its function is as follows. Usually encoded in the trnK tRNA gene intron. Probably assists in splicing its own and other chloroplast group II introns. This is Maturase K from Spinacia oleracea (Spinach).